The chain runs to 199 residues: Probable NADH dehydrogenase [ubiquinone] iron-sulfur protein 7, mitochondrial (199 aa).

Residues Cys-74, Cys-75, Cys-139, and Cys-169 each contribute to the [4Fe-4S] cluster site.

It belongs to the complex I 20 kDa subunit family. Complex I is composed of 45 different subunits This is a component of the iron-sulfur (IP) fragment of the enzyme. The cofactor is [4Fe-4S] cluster.

It localises to the mitochondrion. The enzyme catalyses a ubiquinone + NADH + 5 H(+)(in) = a ubiquinol + NAD(+) + 4 H(+)(out). Functionally, core subunit of the mitochondrial membrane respiratory chain NADH dehydrogenase (Complex I) that is believed to belong to the minimal assembly required for catalysis. Complex I functions in the transfer of electrons from NADH to the respiratory chain. The immediate electron acceptor for the enzyme is believed to be ubiquinone. This Caenorhabditis elegans protein is Probable NADH dehydrogenase [ubiquinone] iron-sulfur protein 7, mitochondrial (nduf-7).